The chain runs to 848 residues: Neurofilament medium polypeptide (848 aa).

Residues 1–10 (MSYTLDSLGN) show a composition bias toward polar residues. Residues 1–51 (MSYTLDSLGNPSAYRRVTETRSSFSRVSGSPSSGFRSQSWSRGSPSTVSSS) are disordered. Residue serine 2 is modified to N-acetylserine. The interval 2-102 (SYTLDSLGNP…KLSRSNEKEQ (101 aa)) is head. Over residues 21 to 44 (RSSFSRVSGSPSSGFRSQSWSRGS) the composition is skewed to low complexity. A Phosphoserine modification is found at serine 30. The residue at position 42 (arginine 42) is an Omega-N-methylarginine. O-linked (GlcNAc) threonine glycosylation occurs at threonine 47. Residue serine 97 is modified to Phosphoserine. The IF rod domain maps to 99 to 410 (EKEQLQGLND…KLLEGEETRF (312 aa)). The interval 103–134 (LQGLNDRFAGYIEKVHYLEQQNKEIEAEIQAL) is coil 1A. Residues 135-147 (RQKQASHAQLGDA) are linker 1. Residues 148–246 (YDQEIRELRA…EEEVADLLAQ (99 aa)) are coil 1B. Serine 224 is subject to Phosphoserine. The segment at 247-263 (IQASHITVERKDYLKTD) is linker 12. Positions 264-285 (ISTALKEIRSQLECHSDQNMHQ) are coil 2A. The tract at residues 286-289 (AEEW) is linker 2. The interval 290–410 (FKCRYAKLTE…KLLEGEETRF (121 aa)) is coil 2B. Tyrosine 318 is modified (phosphotyrosine). A phosphoserine mark is found at serine 344, serine 416, and serine 428. Residues 411-848 (STFSGSITGP…AIVKEVTQGD (438 aa)) form a tail region. A glycan (O-linked (GlcNAc) threonine) is linked at threonine 430. Phosphoserine occurs at positions 466 and 482. Positions 482–785 (SAKEEKEEAE…GEDSSDDKVV (304 aa)) are disordered. Positions 488–498 (EEAEEKEEEPE) are enriched in acidic residues. The span at 499–509 (AEKSPVKSPEA) shows a compositional bias: basic and acidic residues. Phosphoserine is present on residues serine 502 and serine 506. Positions 510-533 (KEEEEEGEKEEEEEGQEEEEEEDE) are enriched in acidic residues. The span at 534–553 (GVKSDQAEEGGSEKEGSSEK) shows a compositional bias: basic and acidic residues. Phosphoserine is present on residues serine 537, serine 545, serine 550, and serine 551. Residues 554-576 (DEGEQEEEEGETEAEGEGEEAEA) show a composition bias toward acidic residues. Residue threonine 565 is modified to Phosphothreonine. The span at 577-604 (KEEKKIEGKVEEVAVKEEIKVEKPEKAK) shows a compositional bias: basic and acidic residues. Residues serine 605 and serine 610 each carry the phosphoserine modification. Basic and acidic residues-rich tracts occupy residues 611–677 (PVEE…KAVE) and 689–711 (SLEK…KAEE). Threonine 642 carries the post-translational modification Phosphothreonine. Residues serine 645, serine 669, serine 689, serine 715, serine 723, serine 753, and serine 769 each carry the phosphoserine modification. 2 stretches are compositionally biased toward basic and acidic residues: residues 720 to 732 (SDRS…KEDI) and 748 to 760 (TQEK…EEKG). The segment covering 771 to 785 (AEEKKGEDSSDDKVV) has biased composition (basic and acidic residues).

This sequence belongs to the intermediate filament family. As to quaternary structure, forms heterodimers with NEFL; which can further hetero-oligomerize (in vitro). Forms heterodimers with INA (in vitro). There are a number of repeats of the tripeptide K-S-P, NFM is phosphorylated on a number of the serines in this motif. It is thought that phosphorylation of NFM results in the formation of interfilament cross bridges that are important in the maintenance of axonal caliber. Post-translationally, phosphorylation seems to play a major role in the functioning of the larger neurofilament polypeptides (NF-M and NF-H), the levels of phosphorylation being altered developmentally and coincidentally with a change in the neurofilament function. In terms of processing, phosphorylated in the head and rod regions by the PKC kinase PKN1, leading to the inhibition of polymerization. As to expression, expressed in the sciatic nerve (at protein level).

It is found in the cytoplasm. It localises to the cytoskeleton. The protein localises to the cell projection. The protein resides in the axon. In terms of biological role, neurofilaments usually contain three intermediate filament proteins: NEFL, NEFM, and NEFH which are involved in the maintenance of neuronal caliber. May additionally cooperate with the neuronal intermediate filament proteins PRPH and INA to form neuronal filamentous networks. The polypeptide is Neurofilament medium polypeptide (Nefm) (Mus musculus (Mouse)).